The following is a 48-amino-acid chain: DNA-directed RNA polymerase subunit Rpo12 (48 aa).

Zn(2+)-binding residues include cysteine 9, cysteine 26, and cysteine 29.

Belongs to the archaeal Rpo12/eukaryotic RPC10 RNA polymerase subunit family. Part of the RNA polymerase complex. It depends on Zn(2+) as a cofactor.

It localises to the cytoplasm. It catalyses the reaction RNA(n) + a ribonucleoside 5'-triphosphate = RNA(n+1) + diphosphate. In terms of biological role, DNA-dependent RNA polymerase (RNAP) catalyzes the transcription of DNA into RNA using the four ribonucleoside triphosphates as substrates. This is DNA-directed RNA polymerase subunit Rpo12 from Saccharolobus islandicus (strain Y.N.15.51 / Yellowstone #2) (Sulfolobus islandicus).